The sequence spans 378 residues: POU domain, class 3, transcription factor 2 (378 aa).

3 disordered regions span residues 1 to 28 (MATT…SMQQ), 86 to 118 (SPRD…HDSR), and 151 to 205 (LIPG…TPTS). Basic and acidic residues predominate over residues 164-181 (MRDAHEDHHSPHLSDHGH). Residues 200–274 (EDTPTSDDLE…LLNKWLEEAD (75 aa)) enclose the POU-specific domain. Ser-279 is subject to Phosphoserine. The segment at residues 292–351 (KRKKRTSIEVSVKGALESHFLKCPKPAASEITSLADSLQLEKEVVRVWFCNRRQKEKRMT) is a DNA-binding region (homeobox). The disordered stretch occupies residues 347-378 (EKRMTPPGGPLPGTEDVYGDTPPHHGVQTPVQ).

The protein belongs to the POU transcription factor family. Class-3 subfamily. In terms of tissue distribution, predominantly expressed in the central nervous system, with strong expression in the cerebellum.

It localises to the nucleus. Its function is as follows. Transcription factor that may play important roles in patterning the embryonic brain. In Danio rerio (Zebrafish), this protein is POU domain, class 3, transcription factor 2 (pou3f2).